The chain runs to 86 residues: Colicin-E9 immunity protein (86 aa).

This sequence belongs to the colicins ColE2/ColE8/ColE9 and pyocins S1/S2 family.

This protein is able to protect a cell, which harbors the plasmid ColE9 encoding colicin E9, against colicin E9, it binds specifically to the DNase-type colicin and inhibits its bactericidal activity. The protein is Colicin-E9 immunity protein (imm) of Escherichia coli.